Consider the following 344-residue polypeptide: MSKNKSSSSKTSKTSKSSKKDVFDFTALNSDQLQNVDHNDPKLLEHLKLGPLSMFEDIDNDQERYNKMKQAFFESLFKCVALEQYRDKLFKEMTTINPEDANEDAKVKNSLKLEKEEGSDEKSKKSKKSSKKDDSDDESDNSNDSEESEAEDSDQESEKKNSKSSSKKVPKKSKDNSDVEGSDSEEESPKSAKNAKASKPAAKKSSKKQDSETEEDSESEKKSSKKVAPKGKAPVKANKKKNDSEDEDSGSDNSEEESEEPPKKASSKKPPSKSSKKAQSEDEDEDSGQSESEHSEEESNSDEDSGQSEEESEEEPPKKSKGAKAKPVAKTAKKTPAKKNSKGR.

The tract at residues 95–344 (TINPEDANED…TPAKKNSKGR (250 aa)) is disordered. The segment covering 103-123 (EDAKVKNSLKLEKEEGSDEKS) has biased composition (basic and acidic residues). Residues 135–155 (SDDESDNSNDSEESEAEDSDQ) show a composition bias toward acidic residues. Positions 191–200 (SAKNAKASKP) are enriched in low complexity. Positions 244-259 (SEDEDSGSDNSEEESE) are enriched in acidic residues. Residues 265–276 (ASSKKPPSKSSK) are compositionally biased toward basic residues. Residues 281–314 (EDEDEDSGQSESEHSEEESNSDEDSGQSEEESEE) show a composition bias toward acidic residues. The segment covering 331 to 344 (TAKKTPAKKNSKGR) has biased composition (basic residues).

This is an uncharacterized protein from Acanthamoeba polyphaga (Amoeba).